The chain runs to 229 residues: Serine acetyltransferase (229 aa).

Belongs to the transferase hexapeptide repeat family.

The protein localises to the cytoplasm. The enzyme catalyses L-serine + acetyl-CoA = O-acetyl-L-serine + CoA. Its pathway is amino-acid biosynthesis; L-cysteine biosynthesis; L-cysteine from L-serine: step 1/2. Catalyzes the acetylation of serine by acetyl-CoA to produce O-acetylserine (OAS). In Mycobacterium tuberculosis (strain ATCC 25618 / H37Rv), this protein is Serine acetyltransferase (cysE).